The chain runs to 1455 residues: Nik-related protein kinase (1455 aa).

The region spanning 25–313 is the Protein kinase domain; sequence FSLDKAIGLG…SGNMLLHPFV (289 aa). ATP is bound by residues 31–39 and K54; that span reads IGLGTYGRI. D177 acts as the Proton acceptor in catalysis. 2 disordered regions span residues 385 to 404 and 471 to 568; these read LHGE…PQDQ and TQDN…EDKE. Residues 471-480 show a composition bias toward polar residues; that stretch reads TQDNKATSPE. Residues 494-505 show a composition bias toward basic and acidic residues; that stretch reads EALETEQPKDLD. Residues 520–531 are compositionally biased toward low complexity; that stretch reads QPRQGQAAEQQQ. The segment covering 540-568 has biased composition (acidic residues); that stretch reads PPEEDREPEQAEVQEEAVEPPQAEIEDKE. Residues 716–750 are a coiled coil; the sequence is RRRHRRWEDIFNQHEEQLRRVENDREDDSSDNDEV. 2 disordered regions span residues 760–854 and 1029–1080; these read IEPH…PPYS and AFGN…TETS. 2 positions are modified to phosphoserine: S847 and S850. Low complexity predominate over residues 1029-1038; sequence AFGNHGANRG. Residues 1044-1078 show a composition bias toward basic and acidic residues; the sequence is RNREANGRNEENGAFGRDQHVFPEFEHEESDRGTE. The region spanning 1138–1425 is the CNH domain; it reads SSEVYCGSLW…RFLCARGDKM (288 aa).

Belongs to the protein kinase superfamily. STE Ser/Thr protein kinase family. STE20 subfamily.

The catalysed reaction is L-seryl-[protein] + ATP = O-phospho-L-seryl-[protein] + ADP + H(+). The enzyme catalyses L-threonyl-[protein] + ATP = O-phospho-L-threonyl-[protein] + ADP + H(+). In terms of biological role, may phosphorylate cofilin-1 and induce actin polymerization through this process, during the late stages of embryogenesis. Involved in the TNF-alpha-induced signaling pathway. The chain is Nik-related protein kinase (Nrk) from Mus musculus (Mouse).